A 211-amino-acid polypeptide reads, in one-letter code: Histone H1-beta, late embryonic (211 aa).

Disordered stretches follow at residues 1–22 and 81–211; these read MAAEQKKVAKKPRAKPAHPSSS and KGAS…AAKK. One can recognise an H15 domain in the interval 17-91; the sequence is AHPSSSEMVL…GASGSFKLGK (75 aa). Composition is skewed to basic and acidic residues over residues 95-107 and 114-123; these read GKSDAQKAPDAAK and KKKEAKEKKA. Composition is skewed to basic residues over residues 124-177 and 185-211; these read ARSK…KKAA and KAAKKPAAKKAAKKVAKKPAAKKAAKK.

It belongs to the histone H1/H5 family.

It is found in the nucleus. The protein resides in the chromosome. Histones H1 are necessary for the condensation of nucleosome chains into higher-order structures. The polypeptide is Histone H1-beta, late embryonic (Strongylocentrotus purpuratus (Purple sea urchin)).